A 354-amino-acid polypeptide reads, in one-letter code: Fructose-bisphosphate aldolase (354 aa).

Ser50 serves as a coordination point for D-glyceraldehyde 3-phosphate. The Proton donor role is filled by Asp83. Zn(2+)-binding residues include His84, Asp105, Glu142, and His198. Gly199 is a binding site for dihydroxyacetone phosphate. Position 232 (His232) interacts with Zn(2+). Dihydroxyacetone phosphate-binding positions include 233–235 (GSS) and 275–278 (NIDT).

This sequence belongs to the class II fructose-bisphosphate aldolase family. Zn(2+) is required as a cofactor.

It carries out the reaction beta-D-fructose 1,6-bisphosphate = D-glyceraldehyde 3-phosphate + dihydroxyacetone phosphate. It participates in carbohydrate degradation; glycolysis; D-glyceraldehyde 3-phosphate and glycerone phosphate from D-glucose: step 4/4. In terms of biological role, catalyzes the aldol condensation of dihydroxyacetone phosphate (DHAP or glycerone-phosphate) with glyceraldehyde 3-phosphate (G3P) to form fructose 1,6-bisphosphate (FBP) in gluconeogenesis and the reverse reaction in glycolysis. The sequence is that of Fructose-bisphosphate aldolase (fba) from Pseudomonas aeruginosa (strain ATCC 15692 / DSM 22644 / CIP 104116 / JCM 14847 / LMG 12228 / 1C / PRS 101 / PAO1).